Consider the following 171-residue polypeptide: 3-hydroxydecanoyl-[acyl-carrier-protein] dehydratase (171 aa).

H70 is an active-site residue.

This sequence belongs to the thioester dehydratase family. FabA subfamily. In terms of assembly, homodimer.

It is found in the cytoplasm. The catalysed reaction is a (3R)-hydroxyacyl-[ACP] = a (2E)-enoyl-[ACP] + H2O. It carries out the reaction (3R)-hydroxydecanoyl-[ACP] = (2E)-decenoyl-[ACP] + H2O. The enzyme catalyses (2E)-decenoyl-[ACP] = (3Z)-decenoyl-[ACP]. The protein operates within lipid metabolism; fatty acid biosynthesis. Its function is as follows. Necessary for the introduction of cis unsaturation into fatty acids. Catalyzes the dehydration of (3R)-3-hydroxydecanoyl-ACP to E-(2)-decenoyl-ACP and then its isomerization to Z-(3)-decenoyl-ACP. Can catalyze the dehydratase reaction for beta-hydroxyacyl-ACPs with saturated chain lengths up to 16:0, being most active on intermediate chain length. The protein is 3-hydroxydecanoyl-[acyl-carrier-protein] dehydratase of Pseudomonas fluorescens (strain ATCC BAA-477 / NRRL B-23932 / Pf-5).